We begin with the raw amino-acid sequence, 295 residues long: MSFLNNDFGSPPATSSPPTTMPKLPTIQDMLNNIGASTVNLMQPNPYLMQNQIPLPVPNLPLNPFLHLNPAISQEIIQQFIAMSFNTPNVLASIANMGDDEGPSCNPKMRRGDLLKSVSMDSTEDPPSITLDNNGDMIVPNNDKEGWCRNKKYIEQTENGYMCTVCRKVYGRYNSVSYHVTIYHRNPPIKCNVPNCQFTTREARYIHFHKNYRHGIPLPESIDQGSRKCPHCRHVSKSPAMLEKHIRRHQIKDGLSNINEAIRERTSTICDEAMEIEPAETEVDPIETKPRSCTL.

Residues 1–23 (MSFLNNDFGSPPATSSPPTTMPK) are disordered. The span at 10 to 22 (SPPATSSPPTTMP) shows a compositional bias: low complexity. The C2H2-type 1; degenerate zinc finger occupies 161–183 (YMCTVCRKVYGRYNSVSYHVTIY). A C2H2-type 2 zinc finger spans residues 227 to 249 (RKCPHCRHVSKSPAMLEKHIRRH).

This sequence belongs to the krueppel C2H2-type zinc-finger protein family. As to quaternary structure, interacts with ceh-60.

It is found in the chromosome. The protein localises to the nucleus. The protein resides in the cytoplasm. Functionally, zinc finger transcription factor which acts as both a transcriptional activator and repressor. Binds to the promoters of genes that contain the 5'-CTTATCA-3' DNA consensus sequence in their regulatory region. Functions downstream of the Insulin/IGF-1-like signaling (IIS) mediated pathway. Involved in normal development, lifespan, stress response, lipid metabolism, innate immunity and exit from the developmentally arrested larval state known as dauer. Required for stress-induced expression of hsp-90 and resistance to heat stress, perhaps as part of a systemic stress signaling pathway. Involved in maintenance of proteostasis. Under hypoxic stress increases lipid levels by positively regulating fatty acid synthesis via fat-7 expression. Associates with homeobox protein ceh-60 at the promoters of some stress-responsive genes to regulate expression; may require phosphorylation for transcriptional repression activity. Acts downstream of nhr-14 to activate transcription of intestinal metal transporter smf-3, modulating innate immunity and iron uptake. May act downstream of the mTORC2 signaling mediated pathway. May act in a mutually exclusive manner with the FOXO transcription factor daf-16. The protein is Zinc finger transcription factor pqm-1 of Caenorhabditis elegans.